The chain runs to 601 residues: NAD(+)--arginine ADP-ribosyltransferase Chelt (601 aa).

Residues 1–18 form the signal peptide; sequence MKTIISLIFIMFPLFVSA. NAD(+) is bound by residues 26–43 and Glu130; that span reads ADSRSPNEIKDLGGLYPR. The active site involves Glu130. Cysteines 205 and 220 form a disulfide.

This sequence belongs to the enterotoxin A family.

Its subcellular location is the secreted. It carries out the reaction L-arginyl-[protein] + NAD(+) = N(omega)-(ADP-D-ribosyl)-L-arginyl-[protein] + nicotinamide + H(+). Functionally, a probable mono(ADP-ribosyl)transferase, it may ADP-ribosylate Arg in target protein(s). Upon expression in yeast cells causes cell death. This Vibrio cholerae protein is NAD(+)--arginine ADP-ribosyltransferase Chelt.